Here is a 100-residue protein sequence, read N- to C-terminus: UPF0213 protein YhbQ (100 aa).

Residues 2–77 (TPWYLYLIRT…KQLTKRQKER (76 aa)) form the GIY-YIG domain.

This sequence belongs to the UPF0213 family.

The chain is UPF0213 protein YhbQ from Escherichia coli O8 (strain IAI1).